The chain runs to 113 residues: Ribonuclease P protein component (113 aa).

Belongs to the RnpA family. Consists of a catalytic RNA component (M1 or rnpB) and a protein subunit.

The catalysed reaction is Endonucleolytic cleavage of RNA, removing 5'-extranucleotides from tRNA precursor.. In terms of biological role, RNaseP catalyzes the removal of the 5'-leader sequence from pre-tRNA to produce the mature 5'-terminus. It can also cleave other RNA substrates such as 4.5S RNA. The protein component plays an auxiliary but essential role in vivo by binding to the 5'-leader sequence and broadening the substrate specificity of the ribozyme. The polypeptide is Ribonuclease P protein component (Clavibacter michiganensis subsp. michiganensis (strain NCPPB 382)).